A 373-amino-acid chain; its full sequence is GDP-mannose 4,6 dehydratase 2 (373 aa).

Positions 1–15 (MASENNGSRSDSESI) are enriched in polar residues. The tract at residues 1 to 21 (MASENNGSRSDSESITAPKAD) is disordered. NADP(+)-binding positions include 35–40 (GITGQD), Arg60, 91–92 (DL), 113–117 (LAAQS), and Tyr128. A substrate-binding site is contributed by Ser117. Ser162 contacts substrate. Ser162 is a catalytic residue. Catalysis depends on nucleophile residues Glu164 and Tyr185. Tyr185 lines the substrate pocket. Lys189 is an NADP(+) binding site. Asn214 is a substrate binding site. His215 and Arg220 together coordinate NADP(+). Substrate is bound by residues 220 to 228 (RGENFVTRK), Gly247, Arg253, and 314 to 317 (RPAE).

It belongs to the NAD(P)-dependent epimerase/dehydratase family. GDP-mannose 4,6-dehydratase subfamily. Homotetramer. Binds to GER1. NADP(+) is required as a cofactor. In terms of tissue distribution, expressed in roots, flowers, siliques, leaves and stems. Not expressed in the root meristem and the proximal part of the elongation zone, or in emerging lateral roots. Expressed in trichomes and guard cells, and in pollen just before anthesis.

The catalysed reaction is GDP-alpha-D-mannose = GDP-4-dehydro-alpha-D-rhamnose + H2O. It participates in nucleotide-sugar biosynthesis; GDP-L-fucose biosynthesis via de novo pathway; GDP-L-fucose from GDP-alpha-D-mannose: step 1/2. In terms of biological role, catalyzes the conversion of GDP-D-mannose to GDP-4-dehydro-6-deoxy-D-mannose. This chain is GDP-mannose 4,6 dehydratase 2 (MUR1), found in Arabidopsis thaliana (Mouse-ear cress).